A 430-amino-acid polypeptide reads, in one-letter code: 2-deoxy-scyllo-inosose synthase (430 aa).

Residues aspartate 42, 73–76, 105–109, 129–130, 140–142, and 151–152 each bind NAD(+); these read EVHK, GVTGN, TT, SLK, and KN. Lysine 142 is an active-site residue. Position 184 (glutamate 184) interacts with Co(2+). Glutamate 244 is a catalytic residue. Positions 247 and 263 each coordinate Co(2+). Residues 371 to 430 form a disordered region; the sequence is RGGAGGGAAEPAAARTGPVPDGPEAAVPATPGPVPAGPAAAAPLPSGPAPTAPAAAGPVP. Low complexity predominate over residues 379-399; it reads AEPAAARTGPVPDGPEAAVPA.

The protein belongs to the sugar phosphate cyclases superfamily. DOI synthase family. It depends on NAD(+) as a cofactor. Co(2+) serves as cofactor.

It catalyses the reaction D-glucose 6-phosphate = 2-deoxy-L-scyllo-inosose + phosphate. Its pathway is metabolic intermediate biosynthesis; 2-deoxystreptamine biosynthesis; 2-deoxystreptamine from D-glucose 6-phosphate: step 1/4. It functions in the pathway antibiotic biosynthesis; neomycin biosynthesis. In terms of biological role, catalyzes the intramolecular carbocycle formation from D-glucose-6-phosphate to 2-deoxy-scyllo-inosose (DOI). The sequence is that of 2-deoxy-scyllo-inosose synthase (neoC) from Streptomyces fradiae (Streptomyces roseoflavus).